We begin with the raw amino-acid sequence, 314 residues long: Solute carrier family 25 member 44 (314 aa).

3 Solcar repeats span residues 18-100, 107-210, and 220-302; these read KKFY…TRKF, SNTV…YAEQ, and PHIV…LKKL. 6 helical membrane passes run 20–42, 71–90, 113–133, 185–201, 222–239, and 278–296; these read FYVF…TLIR, AGLY…GQCY, LVAG…IDVV, GYVA…AVWW, IVFQ…ASIL, and LSAR…VVGY.

The protein belongs to the mitochondrial carrier (TC 2.A.29) family. Highly expressed in brown adipose tissues compared with other metabolic organs.

It localises to the mitochondrion membrane. The enzyme catalyses L-valine(in) = L-valine(out). It catalyses the reaction L-leucine(in) = L-leucine(out). Mitochondrial solute transporter which transports branched-chain amino acid (BCAA; valine, leucine and isoleucine) into mitochondria in brown adipose tissue (BAT). BAT is involved in BCAA catabolism and actively utilizes BCAA in the mitochondria for thermogenesis. The chain is Solute carrier family 25 member 44 from Mus musculus (Mouse).